A 314-amino-acid polypeptide reads, in one-letter code: tRNA dimethylallyltransferase (314 aa).

14 to 21 provides a ligand contact to ATP; it reads GPTASGKT. Substrate is bound at residue 16–21; sequence TASGKT. Interaction with substrate tRNA stretches follow at residues 39 to 42, 163 to 167, and 245 to 250; these read DSAQ, QRLQR, and RCVGYR.

It belongs to the IPP transferase family. Monomer. Mg(2+) is required as a cofactor.

It carries out the reaction adenosine(37) in tRNA + dimethylallyl diphosphate = N(6)-dimethylallyladenosine(37) in tRNA + diphosphate. In terms of biological role, catalyzes the transfer of a dimethylallyl group onto the adenine at position 37 in tRNAs that read codons beginning with uridine, leading to the formation of N6-(dimethylallyl)adenosine (i(6)A). This chain is tRNA dimethylallyltransferase, found in Dechloromonas aromatica (strain RCB).